Here is a 279-residue protein sequence, read N- to C-terminus: Proline-rich protein 23D1 (279 aa).

Disordered regions lie at residues 1 to 60 (MYGY…PHLN) and 247 to 270 (LRPM…RPPS). Positions 15–33 (TEPQNDNEGETSLATTQMN) are enriched in polar residues.

Belongs to the PRR23 family.

The chain is Proline-rich protein 23D1 (PRR23D1) from Homo sapiens (Human).